A 1201-amino-acid chain; its full sequence is Putative disease resistance protein At4g19050 (1201 aa).

33-40 (GEAGIGKT) contacts ATP. LRR repeat units lie at residues 469-491 (KLRV…SGLQ), 492-514 (GLHV…FFKN), 517-539 (QLQS…EKLS), 540-562 (MLRC…IVET), 680-701 (ELRI…IADV), 703-725 (NLNK…EKLT), 726-748 (HLEV…FGEM), 750-771 (YLHE…ISEL), 773-795 (NLKE…EKLT), 796-818 (NLEI…FENL), 820-841 (CLHK…ISEL), 843-865 (NLKE…EKLT), 866-888 (HLVI…FESM), and 890-911 (YLCE…PKQS). The span at 1162–1180 (DEPRIGARITDEISEDQPH) shows a compositional bias: basic and acidic residues. A disordered region spans residues 1162–1201 (DEPRIGARITDEISEDQPHKNTIGPETQTPTQPTKATDTV). The span at 1185-1201 (GPETQTPTQPTKATDTV) shows a compositional bias: polar residues.

The protein belongs to the disease resistance NB-LRR family.

Potential disease resistance protein. The protein is Putative disease resistance protein At4g19050 of Arabidopsis thaliana (Mouse-ear cress).